A 276-amino-acid polypeptide reads, in one-letter code: Lipoyl synthase (276 aa).

[4Fe-4S] cluster-binding residues include Cys27, Cys32, Cys38, Cys53, Cys57, Cys60, and Ser266. The Radical SAM core domain maps to 39-255; the sequence is FGNKTATFMI…EEIGYEMGFK (217 aa).

Belongs to the radical SAM superfamily. Lipoyl synthase family. The cofactor is [4Fe-4S] cluster.

Its subcellular location is the cytoplasm. It carries out the reaction [[Fe-S] cluster scaffold protein carrying a second [4Fe-4S](2+) cluster] + N(6)-octanoyl-L-lysyl-[protein] + 2 oxidized [2Fe-2S]-[ferredoxin] + 2 S-adenosyl-L-methionine + 4 H(+) = [[Fe-S] cluster scaffold protein] + N(6)-[(R)-dihydrolipoyl]-L-lysyl-[protein] + 4 Fe(3+) + 2 hydrogen sulfide + 2 5'-deoxyadenosine + 2 L-methionine + 2 reduced [2Fe-2S]-[ferredoxin]. It functions in the pathway protein modification; protein lipoylation via endogenous pathway; protein N(6)-(lipoyl)lysine from octanoyl-[acyl-carrier-protein]: step 2/2. In terms of biological role, catalyzes the radical-mediated insertion of two sulfur atoms into the C-6 and C-8 positions of the octanoyl moiety bound to the lipoyl domains of lipoate-dependent enzymes, thereby converting the octanoylated domains into lipoylated derivatives. This Aquifex aeolicus (strain VF5) protein is Lipoyl synthase.